Consider the following 374-residue polypeptide: Glutamine synthetase (374 aa).

The interval 2–25 is required for glutamine-induced ubiquitination by CRL4(CRBN) and proteasomal degradation; that stretch reads TTSASSHLNKGIKQVYMSLPQGEK. N6-acetyllysine is present on residues lysine 11 and lysine 14. The GS beta-grasp domain occupies 24 to 106; that stretch reads EKVQAMYIWI…VLCESFQVQF (83 aa). Residues 114 to 374 enclose the GS catalytic domain; the sequence is LRHTCKRIMD…TGDEPFQYKN (261 aa). ATP is bound at residue glutamate 135. 4 residues coordinate Mn(2+): glutamate 135, glutamate 137, glutamate 197, and glutamate 204. 204 to 209 is a binding site for ATP; the sequence is EFQIGP. Position 247-248 (247-248) interacts with L-glutamate; sequence NW. Histidine 254 provides a ligand contact to Mn(2+). ATP-binding positions include 256–258, arginine 320, and arginine 325; that span reads NFS. Arginine 320 contributes to the L-glutamate binding site. 337–339 lines the ADP pocket; the sequence is YFE. Glutamate 339 provides a ligand contact to Mn(2+). Arginine 341 contacts L-glutamate. At serine 344 the chain carries Phosphoserine.

It belongs to the glutamine synthetase family. As to quaternary structure, decamer; composed of two pentamers. Interacts with PALMD. Interacts with RHOJ. Interacts with BEST2; this interaction tethers a fraction of GLUL to the membrane, causing a decrease of cytosolic glutamine synthase (GS) activity and inhibits the chloride channel activity of BEST2 by affecting the gating at the aperture in the absence of intracellular glutamate. The cofactor is Mg(2+). Mn(2+) is required as a cofactor. Palmitoylated; undergoes autopalmitoylation. In terms of processing, acetylated by EP300/p300; acetylation is stimulated by increased glutamine levels and promotes ubiquitin-mediated proteasomal degradation. Post-translationally, ubiquitinated by ZNRF1. Ubiquitinated by the DCX (DDB1-CUL4-X-box) E3 ubiquitin-protein ligase complex called CRL4(CRBN), leading to proteasomal degradation.

It localises to the cytoplasm. The protein localises to the cytosol. Its subcellular location is the microsome. The protein resides in the mitochondrion. It is found in the cell membrane. It catalyses the reaction L-glutamate + NH4(+) + ATP = L-glutamine + ADP + phosphate + H(+). The catalysed reaction is L-cysteinyl-[protein] + hexadecanoyl-CoA = S-hexadecanoyl-L-cysteinyl-[protein] + CoA. Glutamine synthetase activity is inhibited by methionine sulfoximine (MSO). Functionally, glutamine synthetase that catalyzes the ATP-dependent conversion of glutamate and ammonia to glutamine. Its role depends on tissue localization: in the brain, it regulates the levels of toxic ammonia and converts neurotoxic glutamate to harmless glutamine, whereas in the liver, it is one of the enzymes responsible for the removal of ammonia. Plays a key role in ammonium detoxification during erythropoiesis: the glutamine synthetase activity is required to remove ammonium generated by porphobilinogen deaminase (HMBS) during heme biosynthesis to prevent ammonium accumulation and oxidative stress. Essential for proliferation of fetal skin fibroblasts. Independently of its glutamine synthetase activity, required for endothelial cell migration during vascular development. Involved in angiogenesis by regulating membrane localization and activation of the GTPase RHOJ, possibly by promoting RHOJ palmitoylation. May act as a palmitoyltransferase for RHOJ: able to autopalmitoylate and then transfer the palmitoyl group to RHOJ. Plays a role in ribosomal 40S subunit biogenesis. Through the interaction with BEST2, inhibits BEST2 channel activity by affecting the gating at the aperture in the absence of intracellular L-glutamate, but sensitizes BEST2 to intracellular L-glutamate, which promotes the opening of BEST2 and thus relieves its inhibitory effect on BEST2. The polypeptide is Glutamine synthetase (Macaca fascicularis (Crab-eating macaque)).